Consider the following 204-residue polypeptide: Guanylate kinase (204 aa).

Residues 3–181 (GTLYIVSASS…AVSEMSAIFT (179 aa)) enclose the Guanylate kinase-like domain. 10 to 17 (ASSGTGKS) serves as a coordination point for ATP.

It belongs to the guanylate kinase family.

It localises to the cytoplasm. It carries out the reaction GMP + ATP = GDP + ADP. Its function is as follows. Essential for recycling GMP and indirectly, cGMP. This Xylella fastidiosa (strain Temecula1 / ATCC 700964) protein is Guanylate kinase.